Here is a 32-residue protein sequence, read N- to C-terminus: Phallacidin proprotein (32 aa).

A propeptide spanning residues 1–10 (MSDINATRLP) is cleaved from the precursor. Residues 11–17 (AWLVDCP) constitute a cross-link (cyclopeptide (Ala-Pro)). A cross-link (2'-cysteinyl-6'-hydroxytryptophan sulfoxide (Trp-Cys)) is located at residues 12-16 (WLVDC). The propeptide occupies 18 to 32 (CVGDDINRLLTRGEK).

It belongs to the MSDIN fungal toxin family. Processed by the macrocyclase-peptidase enzyme POPB to yield a toxic cyclic heptapeptide. POPB first removes 10 residues from the N-terminus. Conformational trapping of the remaining peptide forces the enzyme to release this intermediate rather than proceed to macrocyclization. The enzyme rebinds the remaining peptide in a different conformation and catalyzes macrocyclization of the N-terminal 7 residues.

Major toxin that belongs to the bicyclic heptapeptides called phallotoxins. Although structurally related to amatoxins, phallotoxins have a different mode of action, which is the stabilization of F-actin. Phallotoxins are poisonous when administered parenterally, but not orally because of poor absorption. In Amanita pallidorosea, this protein is Phallacidin proprotein.